The following is a 457-amino-acid chain: Siroheme synthase (457 aa).

The segment at 4 to 202 is precorrin-2 dehydrogenase /sirohydrochlorin ferrochelatase; the sequence is LPIFCQLRDR…ANADEKAVNA (199 aa). Residues 22-23 and 43-44 each bind NAD(+); these read DV and LT. Ser-128 is modified (phosphoserine). The segment at 216–448 is uroporphyrinogen-III C-methyltransferase; the sequence is GEVVLVGAGP…IIVGRVVALR (233 aa). Position 225 (Pro-225) interacts with S-adenosyl-L-methionine. Asp-248 serves as the catalytic Proton acceptor. Lys-270 (proton donor) is an active-site residue. S-adenosyl-L-methionine is bound by residues 301–303, Ile-306, 331–332, Met-382, Gly-411, and Ala-437; these read GGD and TA.

The protein in the N-terminal section; belongs to the precorrin-2 dehydrogenase / sirohydrochlorin ferrochelatase family. In the C-terminal section; belongs to the precorrin methyltransferase family. In terms of assembly, homodimer.

The catalysed reaction is uroporphyrinogen III + 2 S-adenosyl-L-methionine = precorrin-2 + 2 S-adenosyl-L-homocysteine + H(+). The enzyme catalyses precorrin-2 + NAD(+) = sirohydrochlorin + NADH + 2 H(+). It carries out the reaction siroheme + 2 H(+) = sirohydrochlorin + Fe(2+). It functions in the pathway cofactor biosynthesis; adenosylcobalamin biosynthesis; precorrin-2 from uroporphyrinogen III: step 1/1. It participates in cofactor biosynthesis; adenosylcobalamin biosynthesis; sirohydrochlorin from precorrin-2: step 1/1. The protein operates within porphyrin-containing compound metabolism; siroheme biosynthesis; precorrin-2 from uroporphyrinogen III: step 1/1. Its pathway is porphyrin-containing compound metabolism; siroheme biosynthesis; siroheme from sirohydrochlorin: step 1/1. It functions in the pathway porphyrin-containing compound metabolism; siroheme biosynthesis; sirohydrochlorin from precorrin-2: step 1/1. Its function is as follows. Multifunctional enzyme that catalyzes the SAM-dependent methylations of uroporphyrinogen III at position C-2 and C-7 to form precorrin-2 via precorrin-1. Then it catalyzes the NAD-dependent ring dehydrogenation of precorrin-2 to yield sirohydrochlorin. Finally, it catalyzes the ferrochelation of sirohydrochlorin to yield siroheme. In Salmonella typhimurium (strain LT2 / SGSC1412 / ATCC 700720), this protein is Siroheme synthase.